The primary structure comprises 321 residues: Dolichyl N-acetyl-alpha-D-glucosaminyl phosphate 3-beta-D-2,3-diacetamido-2,3-dideoxy-beta-D-glucuronosyltransferase (321 aa).

The next 2 helical transmembrane spans lie at 252–272 and 290–310; these read FGFLFMLLSIIITGLLIFIYI and LYIALPILLFLFHCLISYGFF.

It belongs to the glycosyltransferase 2 family.

It is found in the cell membrane. The catalysed reaction is an archaeal dolichyl N-acetyl-alpha-D-glucosaminyl phosphate + UDP-2,3-diacetamido-2,3-dideoxy-alpha-D-glucuronate = an archaeal dolichyl 3-O-(2,3-diacetamido-2,3-dideoxy- beta-D-glucuronosyl)-N-acetyl- alpha-D-glucosaminyl phosphate + UDP + H(+). It functions in the pathway cell surface structure biogenesis; S-layer biogenesis. Its pathway is protein modification; protein glycosylation. Involved in the assembly of an N-linked disaccharide that decorates the S-layer glycoprotein and flagellins. AglC catalyzes the transfer of 2,3-diacetamido-2,3-dideoxy-alpha-D-glucuronic acid (Glc-2,3-diNAcA) from uridine 5'-diphospho 2,3-diacetamido-2,3-dideoxy-alpha-D-glucuronic acid (UDP-Glc-2,3-diNAcA) to the AglK product Dol-P-GlcNAc to yield Dol-P-GlcNAc-Glc-2,3-diNAcA. AglC is specific for the monophosphate-linked Dol-P-GlcNAc. In Methanococcus voltae, this protein is Dolichyl N-acetyl-alpha-D-glucosaminyl phosphate 3-beta-D-2,3-diacetamido-2,3-dideoxy-beta-D-glucuronosyltransferase.